The chain runs to 388 residues: Chorismate synthase (388 aa).

Positions 39 and 45 each coordinate NADP(+). Residues 130 to 132, 251 to 252, glycine 296, 311 to 315, and arginine 337 each bind FMN; these read RSS, NA, and KPIPT.

The protein belongs to the chorismate synthase family. Homotetramer. The cofactor is FMNH2.

The enzyme catalyses 5-O-(1-carboxyvinyl)-3-phosphoshikimate = chorismate + phosphate. It functions in the pathway metabolic intermediate biosynthesis; chorismate biosynthesis; chorismate from D-erythrose 4-phosphate and phosphoenolpyruvate: step 7/7. Its function is as follows. Catalyzes the anti-1,4-elimination of the C-3 phosphate and the C-6 proR hydrogen from 5-enolpyruvylshikimate-3-phosphate (EPSP) to yield chorismate, which is the branch point compound that serves as the starting substrate for the three terminal pathways of aromatic amino acid biosynthesis. This reaction introduces a second double bond into the aromatic ring system. This chain is Chorismate synthase, found in Streptococcus pneumoniae (strain 70585).